Here is a 704-residue protein sequence, read N- to C-terminus: Metabotropic glutamate receptor-like protein K (704 aa).

Residues 1–21 (MIKLILSIILIICFIINSIES) form the signal peptide. The Extracellular portion of the chain corresponds to 22–383 (FKMITLTTGP…SKVEFQRSIQ (362 aa)). Residues Asn-66, Asn-104, Asn-256, Asn-286, Asn-308, Asn-337, Asn-343, and Asn-368 are each glycosylated (N-linked (GlcNAc...) asparagine). A helical transmembrane segment spans residues 384–404 (IGFSIVSGLLIGFVILMMIGI). Topologically, residues 405–419 (VKYQDTPSIRSASPS) are cytoplasmic. The helical transmembrane segment at 420–440 (FLNLTLLGGVIIFIGIIVWVA) threads the bilayer. Over 441 to 455 (PISTHQCNARFWLVT) the chain is Extracellular. A helical membrane pass occupies residues 456 to 476 (IGFSTLIGSLVVKNIRIWLIF). Residues 477–492 (DNPELKIRTITNNQLY) lie on the Cytoplasmic side of the membrane. A helical membrane pass occupies residues 493–513 (PWVGLCLVINIVLMSIITTVG). Over 514–541 (DLKAIEAQGIDSLGKFEYMTICKMNYTG) the chain is Extracellular. A glycan (N-linked (GlcNAc...) asparagine) is linked at Asn-538. The chain crosses the membrane as a helical span at residues 542-562 (AATLYSILAYFGTLLLVGVFV). At 563–578 (SWKIRIVHIEEFSECT) the chain is on the cytoplasmic side. A helical membrane pass occupies residues 579 to 599 (AIAKTLYSISFCLFVIVPLMI). Topologically, residues 600 to 608 (SPQDKQSET) are extracellular. A helical membrane pass occupies residues 609–629 (IILCVTGIFITTGALLIFFLP). At 630-704 (KFWRIFGNEK…NESSLSNETK (75 aa)) the chain is on the cytoplasmic side. Disordered stretches follow at residues 657-677 (ARAE…SKSS) and 685-704 (SGIE…NETK).

The protein in the N-terminal section; belongs to the BMP lipoprotein family. In the C-terminal section; belongs to the G-protein coupled receptor 3 family. GABA-B receptor subfamily.

The protein localises to the membrane. The protein is Metabotropic glutamate receptor-like protein K (grlK) of Dictyostelium discoideum (Social amoeba).